Here is a 274-residue protein sequence, read N- to C-terminus: Oxidoreductase stcQ (274 aa).

This sequence belongs to the avfA family.

It functions in the pathway mycotoxin biosynthesis; sterigmatocystin biosynthesis. Functionally, oxidoreductase; part of the gene cluster that mediates the biosynthesis of sterigmatocystin (ST), a polyketide-derived furanocoumarin which is part of the most toxic and carcinogenic compounds among the known mycotoxins. The first step in the biosynthesis of sterigmatocystin is the production of hexanoate by the fatty acid synthase (FAS) units stcJ and stcK. The polyketide backbone is assembled by the non-reducing polyketide synthase stcA by condensation of the starter hexanoyl-CoA and 7 malonyl-CoA extender units followed by cyclization and release of norsolorinic acid. Norsolorinic acid is the first stable intermediate in the biosynthesis of sterigmatocystin and is converted into averantin (AVN) by the ketoreductase stcE which reduces the hexanoate ketone to an alcohol. Averantin is then oxidized into 5'-hydroxyaverantin (HAVN) by the cytochrome P450 monooxygenase stcF. 5'-hydroxyaverantin is further converted to 5'-oxyaverantin (OAVN) by the 5'-hydroxyaverantin dehydrogenase stcG. The next step is the conversion of OAVN into averufin (AVF) which is catalyzed by a yet to be identified enzyme. The cytochrome P450 monooxygenase stcB and the flavin-binding monooxygenase stcW are both required for the conversion of averufin to 1-hydroxyversicolorone. The esterase stcI probably catalyzes the formation of versiconal hemiacetal acetate from 1-hydroxyversicolorone. The oxydoreductase stcN then probably catalyzes the biosynthetic step from versiconal to versicolorin B (VERB). The next step is performed by the versicolorin B desaturase stcL to produce versicolorin A (VERA). The ketoreductase stcU and the cytochrome P450 monooxygenase stcS are involved in the conversion of versicolorin A to demethylsterigmatocystin. The Baeyer-Villiger oxidas stcQ and the reductase stcR might be involved in the biosynthetic step from versicolorin A to demethylsterigmatocystin. The final step in the biosynthesis of sterigmatocystin is the methylation of demethylsterigmatocystin catalyzed by the methyltransferase stcP. The polypeptide is Oxidoreductase stcQ (Emericella nidulans (strain FGSC A4 / ATCC 38163 / CBS 112.46 / NRRL 194 / M139) (Aspergillus nidulans)).